A 490-amino-acid polypeptide reads, in one-letter code: Cobyric acid synthase (490 aa).

Positions 253–440 (KLRVAAPAAP…LHGVFDEPAA (188 aa)) constitute a GATase cobBQ-type domain. Cysteine 334 serves as the catalytic Nucleophile. The active site involves histidine 432.

Belongs to the CobB/CobQ family. CobQ subfamily.

The protein operates within cofactor biosynthesis; adenosylcobalamin biosynthesis. Its function is as follows. Catalyzes amidations at positions B, D, E, and G on adenosylcobyrinic A,C-diamide. NH(2) groups are provided by glutamine, and one molecule of ATP is hydrogenolyzed for each amidation. This chain is Cobyric acid synthase, found in Chromobacterium violaceum (strain ATCC 12472 / DSM 30191 / JCM 1249 / CCUG 213 / NBRC 12614 / NCIMB 9131 / NCTC 9757 / MK).